A 125-amino-acid polypeptide reads, in one-letter code: Cystatin-like cysteine protease inhibitor EPIC2B (125 aa).

The first 21 residues, 1-21, serve as a signal peptide directing secretion; that stretch reads MSFLRPTLALLAVTALVTTSG. Asparagine 45 carries N-linked (GlcNAc...) asparagine glycosylation. Positions 68 to 72 match the Secondary area of contact motif; that stretch reads QVVSG.

It belongs to the cystatin family. As to quaternary structure, interacts with the host papain-like cysteine protease PIP1. Interacts with the host papain-like cysteine protease RCR3. Interacts with the host papain-like cysteine protease C14.

It localises to the secreted. Its function is as follows. Secreted effector that interacts with and inhibits the pathogenesis-related papain-like cysteine proteases C14, PIP1 and RCR3 of host plants. Inhibition of host proteases by a pathogen extracellular protease inhibitor forms a specific type of defense-counterdefense mechanism between plants and microbial pathogens. This chain is Cystatin-like cysteine protease inhibitor EPIC2B, found in Phytophthora infestans (Potato late blight agent).